The sequence spans 159 residues: Succinate dehydrogenase [ubiquinone] cytochrome b small subunit, mitochondrial (159 aa).

The transit peptide at 1 to 56 directs the protein to the mitochondrion; that stretch reads MAVLWRLSAVCGALGGRALLLRTPVVRPAHISAFLQDRPIPEWCGVQHIHLSPSHH. Residues 57–63 lie on the Mitochondrial matrix side of the membrane; it reads SGSKAAS. A helical transmembrane segment spans residues 64 to 85; it reads LHWTSERVVSVLLLGLLPAAYL. Topologically, residues 86–90 are mitochondrial intermembrane; it reads NPCSA. A helical transmembrane segment spans residues 91 to 111; that stretch reads MDYSLAAALTLHGHWGLGQVV. Residue His-102 coordinates heme b. Residues 112–122 are Mitochondrial matrix-facing; it reads TDYVHGDALQK. Position 114 (Tyr-114) interacts with a ubiquinone. The helical transmembrane segment at 123–144 threads the bilayer; that stretch reads AAKAGLLALSALTFAGLCYFNY. Residues 145-159 lie on the Mitochondrial intermembrane side of the membrane; the sequence is HDVGICKAVAMLWKL.

Belongs to the CybS family. In terms of assembly, component of complex II composed of four subunits: the flavoprotein (FP) SDHA, iron-sulfur protein (IP) SDHB, and a cytochrome b560 composed of SDHC and SDHD.

The protein resides in the mitochondrion inner membrane. It participates in carbohydrate metabolism; tricarboxylic acid cycle. Functionally, membrane-anchoring subunit of succinate dehydrogenase (SDH) that is involved in complex II of the mitochondrial electron transport chain and is responsible for transferring electrons from succinate to ubiquinone (coenzyme Q). SDH also oxidizes malate to the non-canonical enol form of oxaloacetate, enol-oxaloacetate. Enol-oxaloacetate, which is a potent inhibitor of the succinate dehydrogenase activity, is further isomerized into keto-oxaloacetate. The sequence is that of Succinate dehydrogenase [ubiquinone] cytochrome b small subunit, mitochondrial (SDHD) from Homo sapiens (Human).